We begin with the raw amino-acid sequence, 282 residues long: Predicted GPI-anchored protein 23 (282 aa).

An N-terminal signal peptide occupies residues 1–18; the sequence is MRVSTLVLSTSIIPIATA. The disordered stretch occupies residues 163-264; the sequence is GQETSGAGSL…SSNSSSSAGM (102 aa). N-linked (GlcNAc...) asparagine glycosylation is found at N180, N192, and N257. Positions 186–216 are enriched in gly residues; the sequence is GGSGSSNGTSSGSGSGSGAGVGSGSGSGSGS. Residues 236–264 show a composition bias toward low complexity; sequence LGISSSISQSTTRQLQTSGSSNSSSSAGM. The GPI-anchor amidated serine moiety is linked to residue S259. A propeptide spans 260-282 (removed in mature form); that stretch reads SSAGMGNVVVGMNAVALAALVLI.

It localises to the cell membrane. Functionally, probable cell surface protein involved in the process of adhesion and early events of invasion. The polypeptide is Predicted GPI-anchored protein 23 (PGA23) (Candida albicans (strain SC5314 / ATCC MYA-2876) (Yeast)).